Reading from the N-terminus, the 174-residue chain is Putative FAS1 domain-containing protein 096L (174 aa).

Residues 36 to 171 form the FAS1 domain; that stretch reads PDTLWSKLNE…GIIHLMEEVY (136 aa).

This chain is Putative FAS1 domain-containing protein 096L, found in Acheta domesticus (House cricket).